An 858-amino-acid chain; its full sequence is MSVVGLDVGSQSCYIAVARAGGIETIANEFSDRCTPSVISFGPKNRTIGVAAKNQQITHANNTVSSFKRFHGRAFNDPFIQKEKENLSYDLVPMKNGGVGIKVMYMDEDHLFSVEQITAMLLTKLKETAENNLKKPVTDCVISVPSFFTDAERRSVLDAAQIVGLNCLRLMNDMTAVALNYGIYKQDLPNADEKPRVVVFVDMGHSSFQVSACAFNKGKLKVLGTAFDPFLGGKNFDEKLVEHFCAEFKTKYKLDAKSKIRALLRLHQECEKLKKLMSSNSTDLPLNIECFMNDKDVSAKMNRSQFEELCAELLQKIEVPLHLLMEQTHLKTEEVSAIEIVGGATRIPAVKERIARFFGKDVSTTLNADEAVARGCALQCAILSPAFKVREFSVTDAVPFPISLVWNHDSEETEGVHEVFSRNHAAPFSKVLTFLRRGPFELEAFYSDPQAVPYPEAKIGRFVVQNVSAQKDGEKSKVKVKVRVNTHGIFTISTASMVEKVPTEEEDGSSVEADMECPNQKPAESSDVDKNIQQDNSEAGTQPQVQTDGQQTSQSPPSPELTSEENKIPDADKANEKKVDQPPEAKKPKIKVVNVELPVEANLVWQLGRDLLNMYIETEGKMIMQDKLEKERNDAKNAVEECVYEFRDKLCGPYEKFICEQEHEKFLRLLTETEDWLYEEGEDQAKQAYIDKLEELMKMGTPVKVRFQEAEERPRVLEELGQRLQHYAKIAADFRGKDEKYNHIDESEMKKVEKSVNEVMEWMNNVMNAQAKRSLHQDPVVRTHEISAKVKELNNVCEPVVTQPKPKIESPKLERTPNGPNMDKKEDLEGKSNLGADAPHQNGECHPNEKGSVSMDLD.

Position 2 is an N-acetylserine (serine 2). Lysine 471 carries the N6-acetyllysine modification. Disordered regions lie at residues 500–585 (KVPT…PPEA) and 801–858 (VTQP…MDLD). The span at 504–515 (EEEDGSSVEADM) shows a compositional bias: acidic residues. Phosphoserine occurs at positions 509 and 510. Positions 533–555 (QQDNSEAGTQPQVQTDGQQTSQS) are enriched in polar residues. A Phosphoserine modification is found at serine 558. Threonine 562 is modified (phosphothreonine). Basic and acidic residues-rich tracts occupy residues 564-585 (EENK…PPEA) and 806-815 (PKIESPKLER). Serine 810 is subject to Phosphoserine. Threonine 816 carries the post-translational modification Phosphothreonine.

Belongs to the heat shock protein 70 family. As to quaternary structure, interacts with HSPA8/HSC70. Interacts with HSPA1A (via NBD) and HSPA1B (via NBD). Post-translationally, phosphorylation on Ser-509 may be important for regulation of the HSPA8/HSC70 chaperone activity.

It localises to the cytoplasm. Acts as a nucleotide-exchange factor (NEF) for chaperone proteins HSPA1A and HSPA1B, promoting the release of ADP from HSPA1A/B thereby triggering substrate release. Prevents the aggregation of denatured proteins in cells under severe stress, on which the ATP levels decrease markedly. Inhibits HSPA8/HSC70 ATPase and chaperone activities. This chain is Heat shock protein 105 kDa (Hsph1), found in Rattus norvegicus (Rat).